A 353-amino-acid chain; its full sequence is Photosystem II D2 protein (353 aa).

N-acetylthreonine is present on T2. Position 2 is a phosphothreonine (T2). The chain crosses the membrane as a helical span at residues C41–T61. H118 serves as a coordination point for chlorophyll a. Residues G125 to P141 form a helical membrane-spanning segment. Pheophytin a contacts are provided by Q130 and N143. Residues V153–S166 traverse the membrane as a helical segment. H198 contributes to the chlorophyll a binding site. The helical transmembrane segment at A208–D228 threads the bilayer. A plastoquinone contacts are provided by H215 and F262. H215 provides a ligand contact to Fe cation. H269 contacts Fe cation. Residues G279–R295 form a helical membrane-spanning segment.

It belongs to the reaction center PufL/M/PsbA/D family. PSII is composed of 1 copy each of membrane proteins PsbA, PsbB, PsbC, PsbD, PsbE, PsbF, PsbH, PsbI, PsbJ, PsbK, PsbL, PsbM, PsbT, PsbX, PsbY, PsbZ, Psb30/Ycf12, at least 3 peripheral proteins of the oxygen-evolving complex and a large number of cofactors. It forms dimeric complexes. The cofactor is The D1/D2 heterodimer binds P680, chlorophylls that are the primary electron donor of PSII, and subsequent electron acceptors. It shares a non-heme iron and each subunit binds pheophytin, quinone, additional chlorophylls, carotenoids and lipids. There is also a Cl(-1) ion associated with D1 and D2, which is required for oxygen evolution. The PSII complex binds additional chlorophylls, carotenoids and specific lipids..

It is found in the plastid. Its subcellular location is the chloroplast thylakoid membrane. It catalyses the reaction 2 a plastoquinone + 4 hnu + 2 H2O = 2 a plastoquinol + O2. Its function is as follows. Photosystem II (PSII) is a light-driven water:plastoquinone oxidoreductase that uses light energy to abstract electrons from H(2)O, generating O(2) and a proton gradient subsequently used for ATP formation. It consists of a core antenna complex that captures photons, and an electron transfer chain that converts photonic excitation into a charge separation. The D1/D2 (PsbA/PsbD) reaction center heterodimer binds P680, the primary electron donor of PSII as well as several subsequent electron acceptors. D2 is needed for assembly of a stable PSII complex. This is Photosystem II D2 protein from Atropa belladonna (Belladonna).